We begin with the raw amino-acid sequence, 293 residues long: Homoserine kinase (293 aa).

80-90 serves as a coordination point for ATP; the sequence is RPASGLGSSAA.

It belongs to the GHMP kinase family. Homoserine kinase subfamily.

The protein localises to the cytoplasm. It carries out the reaction L-homoserine + ATP = O-phospho-L-homoserine + ADP + H(+). Its pathway is amino-acid biosynthesis; L-threonine biosynthesis; L-threonine from L-aspartate: step 4/5. In terms of biological role, catalyzes the ATP-dependent phosphorylation of L-homoserine to L-homoserine phosphate. The chain is Homoserine kinase from Halorubrum lacusprofundi (strain ATCC 49239 / DSM 5036 / JCM 8891 / ACAM 34).